The sequence spans 552 residues: Urocanate hydratase (552 aa).

NAD(+)-binding positions include 49-50 (GG), Gln-127, 173-175 (GMG), Asp-193, 239-240 (NA), 260-264 (QTSAH), 270-271 (YI), and Tyr-319. Cys-407 is a catalytic residue. Gly-489 serves as a coordination point for NAD(+).

Belongs to the urocanase family. It depends on NAD(+) as a cofactor.

Its subcellular location is the cytoplasm. It carries out the reaction 4-imidazolone-5-propanoate = trans-urocanate + H2O. It functions in the pathway amino-acid degradation; L-histidine degradation into L-glutamate; N-formimidoyl-L-glutamate from L-histidine: step 2/3. Catalyzes the conversion of urocanate to 4-imidazolone-5-propionate. In Bacillus cereus (strain ATCC 10987 / NRS 248), this protein is Urocanate hydratase.